Consider the following 675-residue polypeptide: DNA ligase (675 aa).

Residues 34–38 (DYAFD), 83–84 (SL), and Glu-117 each bind NAD(+). The active-site N6-AMP-lysine intermediate is Lys-119. Positions 140, 184, 297, and 321 each coordinate NAD(+). Cys-415, Cys-418, Cys-433, and Cys-439 together coordinate Zn(2+). Residues 598-675 (LVNRNFEGMK…GEEEFEAMLF (78 aa)) form the BRCT domain.

It belongs to the NAD-dependent DNA ligase family. LigA subfamily. Mg(2+) serves as cofactor. Requires Mn(2+) as cofactor.

It carries out the reaction NAD(+) + (deoxyribonucleotide)n-3'-hydroxyl + 5'-phospho-(deoxyribonucleotide)m = (deoxyribonucleotide)n+m + AMP + beta-nicotinamide D-nucleotide.. DNA ligase that catalyzes the formation of phosphodiester linkages between 5'-phosphoryl and 3'-hydroxyl groups in double-stranded DNA using NAD as a coenzyme and as the energy source for the reaction. It is essential for DNA replication and repair of damaged DNA. In Prosthecochloris aestuarii (strain DSM 271 / SK 413), this protein is DNA ligase.